Here is a 168-residue protein sequence, read N- to C-terminus: Putative peroxiredoxin prxA (168 aa).

The region spanning 4-158 is the Thioredoxin domain; the sequence is LKAGDSFPAD…LEPAKNHLEF (155 aa). Cysteine 61 functions as the Cysteine sulfenic acid (-SOH) intermediate in the catalytic mechanism.

This sequence belongs to the peroxiredoxin family. Prx5 subfamily. In terms of assembly, homodimer; disulfide-linked, upon oxidation. Interacts with thioredoxin trxA.

The enzyme catalyses a hydroperoxide + [thioredoxin]-dithiol = an alcohol + [thioredoxin]-disulfide + H2O. Its function is as follows. Thiol-specific peroxidase that catalyzes the reduction of hydrogen peroxide and organic hydroperoxides to water and alcohols, respectively. Plays a role in cell protection against oxidative stress by detoxifying peroxides and as sensor of hydrogen peroxide-mediated signaling events. Involved in osmoadaptation. In Emericella nidulans (strain FGSC A4 / ATCC 38163 / CBS 112.46 / NRRL 194 / M139) (Aspergillus nidulans), this protein is Putative peroxiredoxin prxA.